Reading from the N-terminus, the 156-residue chain is 6,7-dimethyl-8-ribityllumazine synthase (156 aa).

Residues Phe-22, 57-59, and 81-83 contribute to the 5-amino-6-(D-ribitylamino)uracil site; these read AVE and SVI. Residue 86–87 coordinates (2S)-2-hydroxy-3-oxobutyl phosphate; sequence GT. His-89 (proton donor) is an active-site residue. Phe-114 is a 5-amino-6-(D-ribitylamino)uracil binding site. Arg-128 is a binding site for (2S)-2-hydroxy-3-oxobutyl phosphate.

Belongs to the DMRL synthase family. As to quaternary structure, forms an icosahedral capsid composed of 60 subunits, arranged as a dodecamer of pentamers.

The catalysed reaction is (2S)-2-hydroxy-3-oxobutyl phosphate + 5-amino-6-(D-ribitylamino)uracil = 6,7-dimethyl-8-(1-D-ribityl)lumazine + phosphate + 2 H2O + H(+). It functions in the pathway cofactor biosynthesis; riboflavin biosynthesis; riboflavin from 2-hydroxy-3-oxobutyl phosphate and 5-amino-6-(D-ribitylamino)uracil: step 1/2. Catalyzes the formation of 6,7-dimethyl-8-ribityllumazine by condensation of 5-amino-6-(D-ribitylamino)uracil with 3,4-dihydroxy-2-butanone 4-phosphate. This is the penultimate step in the biosynthesis of riboflavin. The protein is 6,7-dimethyl-8-ribityllumazine synthase of Aliivibrio fischeri (strain ATCC 700601 / ES114) (Vibrio fischeri).